Reading from the N-terminus, the 208-residue chain is Cytochrome c oxidase assembly protein CtaG (208 aa).

At methionine 1–glycine 19 the chain is on the cytoplasmic side. The helical; Signal-anchor for type II membrane protein transmembrane segment at arginine 20–alanine 42 threads the bilayer. The Periplasmic portion of the chain corresponds to valine 43–leucine 208.

The protein belongs to the COX11/CtaG family.

Its subcellular location is the cell inner membrane. Its function is as follows. Exerts its effect at some terminal stage of cytochrome c oxidase synthesis, probably by being involved in the insertion of the copper B into subunit I. The sequence is that of Cytochrome c oxidase assembly protein CtaG from Rhodopseudomonas palustris (strain HaA2).